The chain runs to 568 residues: MPKFDVSKRDLERLVGKEFTVEEWEDLFLYAKCELDDVWEENGEIYFKADSKDTNRPDLWSAEGIARQIRWALGFRRGLPEYEVEKSDVTVYVDEKLKDIRPYGVYAIVECLKLDEEALKQMINLQEKVALTFGRRRREVAIGIFDFDKVKPPIYYRAAEKTEKFVPLGFEEELTLEEILEKHEKGREYGHLIKDKPYYPLLVDSEGKVLSMPPIINSETTGRVTTETRNVFVDVTGWDLNKVMLALNVVVTALAERGGRIKSVKVVYPDFEIETPNLTPKSFEVELDYIRKLAGLDLSDGEIKDLLERMMYDVTLEDGKAKLLYPAFRDDIMHARDVLEDVLIAYGYNEIEPEEPKLAVQGRGDKFIEFEDAVRELMVGFGLQEVMTFNLTNREAQYGKMNLEYGRDYFNNPPAELVEIENPISPKWSALRNWLLPSLLDFLSQNTHEEYPQRLFEVGKATLIDESRETKTVSESKLAVVLAQPRVTFTDTKEILDSVMRHLGFEYELEEVEHPSFIPGRVGKVIVKGKAIGVIGEIHPSVLEKWGIEMPVAGFELFLRPLYTEPYL.

Residues 278–353 (LTPKSFEVEL…IAYGYNEIEP (76 aa)) enclose the B5 domain. Residues D331, D337, E340, and D341 each contribute to the Mg(2+) site.

Belongs to the phenylalanyl-tRNA synthetase beta subunit family. Type 2 subfamily. In terms of assembly, tetramer of two alpha and two beta subunits. The cofactor is Mg(2+).

The protein resides in the cytoplasm. The enzyme catalyses tRNA(Phe) + L-phenylalanine + ATP = L-phenylalanyl-tRNA(Phe) + AMP + diphosphate + H(+). The protein is Phenylalanine--tRNA ligase beta subunit of Thermococcus gammatolerans (strain DSM 15229 / JCM 11827 / EJ3).